A 135-amino-acid chain; its full sequence is UPF0355 protein SAV0387 (135 aa).

Belongs to the UPF0355 family.

The chain is UPF0355 protein SAV0387 from Staphylococcus aureus (strain Mu50 / ATCC 700699).